The primary structure comprises 177 residues: MIVAVASRNPNKLRAVQAAYKLFGMRAQVVPVEKPVSLPPQPIGVETVVAGAIERARAALSVVQNAEHGVGIEAGVLQAGGRYLDVTVAAIADRNGVVTIGFGPAFQVPDIFLNDVLRGVELGVLAERYFGRVAIGYKEGIIGVLTKGVVSRFDLNMAAVVMALVPRLSTNAPLYRF.

Belongs to the YjjX NTPase family. In terms of assembly, homodimer. It depends on Mg(2+) as a cofactor. Requires Mn(2+) as cofactor.

The catalysed reaction is XTP + H2O = XDP + phosphate + H(+). It carries out the reaction ITP + H2O = IDP + phosphate + H(+). In terms of biological role, phosphatase that hydrolyzes non-canonical purine nucleotides such as XTP and ITP to their respective diphosphate derivatives. Probably excludes non-canonical purines from DNA/RNA precursor pool, thus preventing their incorporation into DNA/RNA and avoiding chromosomal lesions. This is Probable inosine/xanthosine triphosphatase from Pyrobaculum islandicum (strain DSM 4184 / JCM 9189 / GEO3).